Reading from the N-terminus, the 584-residue chain is MAVGKIVISVASMLLVVGVAIGVVTFVNKGGGAGGDKTLNSHQKAVESLCASATDKGSCAKTLDPVKSDDPSKLIKAFMLATKDAVTKSTNFTASTEEGMGKNINATSKAVLDYCKRVLMYALEDLETIVEEMGEDLQQSGSKMDQLKQWLTGVFNYQTDCIDDIEESELRKVMGEGIAHSKILSSNAIDIFHALTTAMSQMNVKVDDMKKGNLGETPAPDRDLLEDLDQKGLPKWHSDKDRKLMAQAGRPGAPADEGIGEGGGGGGKIKPTHVVAKDGSGQFKTISEAVKACPEKNPGRCIIYIKAGVYKEQVTIPKKVNNVFMFGDGATQTIITFDRSVGLSPGTTTSLSGTVQVESEGFMAKWIGFQNTAGPLGHQAVAFRVNGDRAVIFNCRFDGYQDTLYVNNGRQFYRNIVVSGTVDFIFGKSATVIQNSLILCRKGSPGQTNHVTADGNEKGKAVKIGIVLHNCRIMADKELEADRLTVKSYLGRPWKPFATTAVIGTEIGDLIQPTGWNEWQGEKFHLTATYVEFNNRGPGANTAARVPWAKMAKSAAEVERFTVANWLTPANWIQEANVPVQLGL.

The first 22 residues, 1–22, serve as a signal peptide directing secretion; that stretch reads MAVGKIVISVASMLLVVGVAIG. Positions 40 to 191 are pectinesterase inhibitor; that stretch reads NSHQKAVESL…KILSSNAIDI (152 aa). Asparagine 91 and asparagine 105 each carry an N-linked (GlcNAc...) asparagine glycan. The segment at 246–267 is disordered; the sequence is AQAGRPGAPADEGIGEGGGGGG. The tract at residues 272-571 is pectinesterase; that stretch reads THVVAKDGSG…TVANWLTPAN (300 aa). Threonine 349 and glutamine 379 together coordinate substrate. Residue aspartate 402 is the Proton donor; for pectinesterase activity of the active site. Catalysis depends on aspartate 423, which acts as the Nucleophile; for pectinesterase activity. Residues arginine 492 and tryptophan 494 each coordinate substrate.

The protein in the N-terminal section; belongs to the PMEI family. It in the C-terminal section; belongs to the pectinesterase family. Pollen, and at much lower levels in pistils and petals.

The protein resides in the secreted. Its subcellular location is the cell wall. The enzyme catalyses [(1-&gt;4)-alpha-D-galacturonosyl methyl ester](n) + n H2O = [(1-&gt;4)-alpha-D-galacturonosyl](n) + n methanol + n H(+). It functions in the pathway glycan metabolism; pectin degradation; 2-dehydro-3-deoxy-D-gluconate from pectin: step 1/5. Its function is as follows. Acts in the modification of cell walls via demethylesterification of cell wall pectin. The chain is Probable pectinesterase/pectinesterase inhibitor (BP19) from Brassica napus (Rape).